The following is a 73-amino-acid chain: Translation initiation factor IF-1 (73 aa).

In terms of domain architecture, S1-like spans 1–73 (MSKKKDVIEM…TRGRITYRYK (73 aa)).

Belongs to the IF-1 family. Component of the 30S ribosomal translation pre-initiation complex which assembles on the 30S ribosome in the order IF-2 and IF-3, IF-1 and N-formylmethionyl-tRNA(fMet); mRNA recruitment can occur at any time during PIC assembly.

It localises to the cytoplasm. In terms of biological role, one of the essential components for the initiation of protein synthesis. Stabilizes the binding of IF-2 and IF-3 on the 30S subunit to which N-formylmethionyl-tRNA(fMet) subsequently binds. Helps modulate mRNA selection, yielding the 30S pre-initiation complex (PIC). Upon addition of the 50S ribosomal subunit IF-1, IF-2 and IF-3 are released leaving the mature 70S translation initiation complex. This chain is Translation initiation factor IF-1, found in Roseiflexus castenholzii (strain DSM 13941 / HLO8).